Reading from the N-terminus, the 1042-residue chain is Kinesin-like protein KIN-5A (1042 aa).

A compositionally biased stretch (low complexity) spans 1 to 14 (MDSNNSKKGSSVKS). Positions 1 to 45 (MDSNNSKKGSSVKSPCQTPRSTEKSNRDFRVDSNSNSNPVSKNEK) are disordered. A compositionally biased stretch (basic and acidic residues) spans 21-31 (STEKSNRDFRV). Over residues 32–41 (DSNSNSNPVS) the composition is skewed to polar residues. Positions 50–392 (NIQVIVRCRP…LDYAHRAKHI (343 aa)) constitute a Kinesin motor domain. ATP is bound at residue 136–143 (GQTGTGKT). Residues 480-517 (TAGLREKLDKTEKKLYETEQALLDLEEKHRQAVATIKE) are a coiled coil. The segment at 1021-1042 (KQMQNGEAKHVSNGRPPLTAIN) is disordered.

This sequence belongs to the TRAFAC class myosin-kinesin ATPase superfamily. Kinesin family. KIN-5/BimC subfamily.

Its subcellular location is the cytoplasm. The protein localises to the cytoskeleton. The protein resides in the spindle. Functionally, responsible for microtubule translocation. May be important for the organization of phragmoplast-specific arrays of microtubules. Plays an essential role in stabilizing the mitotic spindle. Required during mitotic cytokinesis. The chain is Kinesin-like protein KIN-5A from Arabidopsis thaliana (Mouse-ear cress).